The sequence spans 159 residues: Large ribosomal subunit protein uL23m (159 aa).

The protein belongs to the universal ribosomal protein uL23 family. Component of the mitochondrial ribosome large subunit (39S) which comprises a 16S rRNA and about 50 distinct proteins.

The protein resides in the mitochondrion. The chain is Large ribosomal subunit protein uL23m (mrpl-23) from Caenorhabditis briggsae.